A 209-amino-acid chain; its full sequence is V-type ATP synthase subunit D (209 aa).

The protein belongs to the V-ATPase D subunit family.

In terms of biological role, produces ATP from ADP in the presence of a proton gradient across the membrane. The protein is V-type ATP synthase subunit D of Anaeromyxobacter sp. (strain K).